We begin with the raw amino-acid sequence, 846 residues long: Choline trimethylamine-lyase (846 aa).

Residues 60-718 (PRHVKLKENF…LLGASANGRR (659 aa)) form the PFL domain. Residue cysteine 489 is the Cysteine radical intermediate of the active site. Glutamate 491 serves as the catalytic Proton acceptor. A Glycine radical domain is found at 725 to 846 (DGISPTQGAD…IISRTMLHGF (122 aa)). Position 821 is a glycine radical (glycine 821).

The protein belongs to the glycyl radical enzyme (GRE) family. CutC subfamily. Homodimer. In terms of processing, requires the activating protein CutD to generate the key active site glycyl radical on Gly-821 that is involved in catalysis.

The enzyme catalyses choline = trimethylamine + acetaldehyde. It participates in amine and polyamine metabolism; choline degradation. Functionally, glycine radical enzyme that catalyzes the cleavage of a C-N bond in choline, producing trimethylamine (TMA) and acetaldehyde. Is involved in the anaerobic choline utilization pathway that allows D.alaskensis to grow on choline as a source of carbon and energy. Is strictly specific for choline as substrate. The chain is Choline trimethylamine-lyase from Oleidesulfovibrio alaskensis (strain ATCC BAA-1058 / DSM 17464 / G20) (Desulfovibrio alaskensis).